The chain runs to 159 residues: UPF0587 protein v1g245604 (159 aa).

Cys33, Cys36, Cys67, and Cys70 together coordinate Zn(2+).

The protein belongs to the UPF0587 family.

In Nematostella vectensis (Starlet sea anemone), this protein is UPF0587 protein v1g245604.